The chain runs to 299 residues: Protease HtpX homolog (299 aa).

Transmembrane regions (helical) follow at residues 15-35 (ILLLVFFLLLALVGYAVGYLF) and 39-59 (GLGGLVIALIIGFIYALSMIF). His-143 is a binding site for Zn(2+). Residue Glu-144 is part of the active site. His-147 lines the Zn(2+) pocket. 2 helical membrane-spanning segments follow: residues 158 to 178 (IAVALASAITMLSSMAGRMMW) and 198 to 218 (IIMLVVSLLAIVLAPLAATLV). Glu-227 contributes to the Zn(2+) binding site.

This sequence belongs to the peptidase M48B family. The cofactor is Zn(2+).

The protein localises to the cell membrane. This chain is Protease HtpX homolog, found in Streptococcus pneumoniae serotype 4 (strain ATCC BAA-334 / TIGR4).